We begin with the raw amino-acid sequence, 258 residues long: UPF0246 protein Sden_2729 (258 aa).

It belongs to the UPF0246 family.

This Shewanella denitrificans (strain OS217 / ATCC BAA-1090 / DSM 15013) protein is UPF0246 protein Sden_2729.